The primary structure comprises 377 residues: Probable G-protein coupled receptor F27E5.8 (377 aa).

The Extracellular portion of the chain corresponds to 1–34 (MSEQDSSSPKYMRFLLGNFTSAEMVTDGNFLIYC). Residue N18 is glycosylated (N-linked (GlcNAc...) asparagine). The chain crosses the membrane as a helical span at residues 35-55 (IEMGLLVIGVLENIFMIGAVF). The Cytoplasmic segment spans residues 56 to 71 (STSCLHLNLRILICNC). A helical transmembrane segment spans residues 72-92 (CLGFILMAVGRAMIAVPLCIA). Residues 93–105 (HLRDVDISSHAWC) are Extracellular-facing. A helical transmembrane segment spans residues 106 to 126 (FIANAVHHSSADSVCLSFVFI). Residues 127–144 (MLERTAGTIWSKDYEKTK) are Cytoplasmic-facing. A helical transmembrane segment spans residues 145–165 (IHIFPCIFAFLQWFIPMFMIL). Over 166–195 (GNFLDRANRMEHFLLYPHLPCQIEYLTPTM) the chain is Extracellular. The helical transmembrane segment at 196 to 216 (FMITIFIIVIGFIASVGGITI) threads the bilayer. Residues 217-251 (VYNKNIKKYNTRDIWFNTVNLSERYQITENIRSTH) are Cytoplasmic-facing. A helical transmembrane segment spans residues 252-272 (LLFPLLALMLIFSTLSVSVLI). Topologically, residues 273-303 (YGGYWVSVMTKEPARFEEVVKWFGRGGEAAQ) are extracellular. A helical transmembrane segment spans residues 304 to 324 (LFDIITAIYTISFPICAFICH). Topologically, residues 325–377 (PNLFRFLRKFIGWNSYAVRPSNLNEIGGFEMSTAPIRTQTEFHFQELSRQWNT) are cytoplasmic.

It belongs to the G-protein coupled receptor 1 family.

It is found in the cell membrane. This chain is Probable G-protein coupled receptor F27E5.8, found in Caenorhabditis elegans.